The following is a 284-amino-acid chain: Tropomyosin (284 aa).

A disordered region spans residues Met-1 to Gln-47. A coiled-coil region spans residues Met-1–Tyr-284. A compositionally biased stretch (basic and acidic residues) spans Lys-12–Lys-38.

The protein belongs to the tropomyosin family. In terms of assembly, homodimer.

Its function is as follows. Tropomyosin, in association with the troponin complex, plays a central role in the calcium dependent regulation of muscle contraction. This is Tropomyosin from Trichinella pseudospiralis (Parasitic roundworm).